The following is a 577-amino-acid chain: Arginine--tRNA ligase (577 aa).

The short motif at 122–132 (PNVAKEMHVGH) is the 'HIGH' region element.

This sequence belongs to the class-I aminoacyl-tRNA synthetase family. In terms of assembly, monomer.

It localises to the cytoplasm. The catalysed reaction is tRNA(Arg) + L-arginine + ATP = L-arginyl-tRNA(Arg) + AMP + diphosphate. The protein is Arginine--tRNA ligase of Histophilus somni (strain 2336) (Haemophilus somnus).